Here is a 201-residue protein sequence, read N- to C-terminus: Pyridoxal 5'-phosphate synthase subunit PdxT (201 aa).

49–51 (GES) is an L-glutamine binding site. Cys-81 serves as the catalytic Nucleophile. Residues Arg-110 and 139–140 (IR) contribute to the L-glutamine site. Active-site charge relay system residues include His-180 and Glu-182.

The protein belongs to the glutaminase PdxT/SNO family. In terms of assembly, in the presence of PdxS, forms a dodecamer of heterodimers. Only shows activity in the heterodimer.

The catalysed reaction is aldehydo-D-ribose 5-phosphate + D-glyceraldehyde 3-phosphate + L-glutamine = pyridoxal 5'-phosphate + L-glutamate + phosphate + 3 H2O + H(+). The enzyme catalyses L-glutamine + H2O = L-glutamate + NH4(+). It participates in cofactor biosynthesis; pyridoxal 5'-phosphate biosynthesis. In terms of biological role, catalyzes the hydrolysis of glutamine to glutamate and ammonia as part of the biosynthesis of pyridoxal 5'-phosphate. The resulting ammonia molecule is channeled to the active site of PdxS. The polypeptide is Pyridoxal 5'-phosphate synthase subunit PdxT (Salinispora tropica (strain ATCC BAA-916 / DSM 44818 / JCM 13857 / NBRC 105044 / CNB-440)).